The primary structure comprises 1040 residues: Multidrug resistance protein MdtB (1040 aa).

12 helical membrane passes run 16 to 36 (FIMRPVATTLLMVAILLAGII), 347 to 367 (LMMAITLVVMIIYLFLRNIPA), 369 to 389 (IIPGVAVPLSLIGTFAVMVFL), 396 to 416 (LTLMALTIATGFVVDDAIVVI), 440 to 460 (IGFTIISLTFSLIAVLIPLLF), 472 to 492 (FAITLAVAILISAVVSLTLTP), 537 to 557 (WLTLSVALSTLLLSVLLWVFI), 863 to 883 (LGSTVWLIVAAVVAMYIVLGI), 888 to 908 (FIHPITILSTLPTAGVGALLA), 911 to 931 (IAGSELDVIAIIGIILLIGIV), 968 to 988 (ILMTTLAALLGALPLMLSTGV), and 998 to 1018 (IGMVGGLIVSQVLTLFTTPVI).

Belongs to the resistance-nodulation-cell division (RND) (TC 2.A.6) family. MdtB subfamily. Part of a tripartite efflux system composed of MdtA, MdtB and MdtC. MdtB forms a heteromultimer with MdtC.

The protein localises to the cell inner membrane. The MdtABC tripartite complex confers resistance against novobiocin and deoxycholate. The protein is Multidrug resistance protein MdtB of Escherichia coli O157:H7 (strain EC4115 / EHEC).